The primary structure comprises 123 residues: Small ribosomal subunit protein uS12 (123 aa).

Aspartate 89 carries the 3-methylthioaspartic acid modification. The segment at 100–123 (GSLDTSGVKGRNQGRSKYGTKRPK) is disordered. The span at 111–123 (NQGRSKYGTKRPK) shows a compositional bias: basic residues.

It belongs to the universal ribosomal protein uS12 family. As to quaternary structure, part of the 30S ribosomal subunit. Contacts proteins S8 and S17. May interact with IF1 in the 30S initiation complex.

Its function is as follows. With S4 and S5 plays an important role in translational accuracy. Functionally, interacts with and stabilizes bases of the 16S rRNA that are involved in tRNA selection in the A site and with the mRNA backbone. Located at the interface of the 30S and 50S subunits, it traverses the body of the 30S subunit contacting proteins on the other side and probably holding the rRNA structure together. The combined cluster of proteins S8, S12 and S17 appears to hold together the shoulder and platform of the 30S subunit. In Pseudomonas fluorescens (strain ATCC BAA-477 / NRRL B-23932 / Pf-5), this protein is Small ribosomal subunit protein uS12.